The following is an 88-amino-acid chain: Small ribosomal subunit protein uS19 (88 aa).

The protein belongs to the universal ribosomal protein uS19 family.

Functionally, protein S19 forms a complex with S13 that binds strongly to the 16S ribosomal RNA. This Chlamydia muridarum (strain MoPn / Nigg) protein is Small ribosomal subunit protein uS19 (rpsS).